Consider the following 199-residue polypeptide: HTH-type transcriptional repressor NemR (199 aa).

The region spanning 7–67 is the HTH tetR-type domain; that stretch reads HDTREHLLAT…AMLERHYAAY (61 aa). The segment at residues 30 to 49 is a DNA-binding region (H-T-H motif); it reads GLSELLKTAEVPKGSFYHYF.

Its function is as follows. Involved in response to both electrophiles and reactive chlorine species (RCS). Represses the transcription of the nemRA-gloA operon by binding to the NemR box. The chain is HTH-type transcriptional repressor NemR (nemR) from Escherichia coli O6:H1 (strain CFT073 / ATCC 700928 / UPEC).